We begin with the raw amino-acid sequence, 524 residues long: 2-isopropylmalate synthase (524 aa).

One can recognise a Pyruvate carboxyltransferase domain in the interval valine 12–threonine 274. Aspartate 21, histidine 209, histidine 211, and asparagine 245 together coordinate Mn(2+). Residues lysine 398–glycine 524 form a regulatory domain region.

This sequence belongs to the alpha-IPM synthase/homocitrate synthase family. LeuA type 1 subfamily. As to quaternary structure, homodimer. Requires Mn(2+) as cofactor.

It is found in the cytoplasm. The catalysed reaction is 3-methyl-2-oxobutanoate + acetyl-CoA + H2O = (2S)-2-isopropylmalate + CoA + H(+). Its pathway is amino-acid biosynthesis; L-leucine biosynthesis; L-leucine from 3-methyl-2-oxobutanoate: step 1/4. Catalyzes the condensation of the acetyl group of acetyl-CoA with 3-methyl-2-oxobutanoate (2-ketoisovalerate) to form 3-carboxy-3-hydroxy-4-methylpentanoate (2-isopropylmalate). The polypeptide is 2-isopropylmalate synthase (Rhodopseudomonas palustris (strain ATCC BAA-98 / CGA009)).